The chain runs to 133 residues: Small ribosomal subunit protein uS8 (133 aa).

It belongs to the universal ribosomal protein uS8 family. Part of the 30S ribosomal subunit. Contacts proteins S5 and S12.

Its function is as follows. One of the primary rRNA binding proteins, it binds directly to 16S rRNA central domain where it helps coordinate assembly of the platform of the 30S subunit. The protein is Small ribosomal subunit protein uS8 of Mycoplasmoides gallisepticum (strain R(low / passage 15 / clone 2)) (Mycoplasma gallisepticum).